A 144-amino-acid chain; its full sequence is Large ribosomal subunit protein uL15 (144 aa).

The segment at 1-54 is disordered; it reads MRLNTLSPAEGSKKAGKRLGRGIGSGLGKTGGRGHKGQNSRSGGGVRRGFEGGQ. Positions 21 to 31 are enriched in gly residues; that stretch reads RGIGSGLGKTG.

It belongs to the universal ribosomal protein uL15 family. In terms of assembly, part of the 50S ribosomal subunit.

Functionally, binds to the 23S rRNA. The polypeptide is Large ribosomal subunit protein uL15 (Enterobacter sp. (strain 638)).